A 551-amino-acid chain; its full sequence is E3 SUMO-protein ligase CBX4 (551 aa).

Residues 11 to 69 (FAVESIEKKRIRKGRVEYLVKWRGWSPKYNTWEPEENILDPRLLIAFQNRERQEQLMGY) form the Chromo domain. Residues lysine 77, lysine 106, lysine 114, and lysine 125 each participate in a glycyl lysine isopeptide (Lys-Gly) (interchain with G-Cter in SUMO2) cross-link. The segment at 125–152 (KKHHQYQPHSKERSGKPPPPGKSGKYYY) is disordered. Lysine 149 is subject to N6-acetyllysine; alternate. Lysine 149 participates in a covalent cross-link: Glycyl lysine isopeptide (Lys-Gly) (interchain with G-Cter in SUMO2); alternate. Residues lysine 157, lysine 167, and lysine 178 each participate in a glycyl lysine isopeptide (Lys-Gly) (interchain with G-Cter in SUMO2) cross-link. The tract at residues 172 to 193 (QYQGGHKEAPSPTCPDLGTKSH) is disordered. Phosphoserine is present on serine 182. Residues lysine 191, lysine 205, lysine 212, lysine 223, lysine 249, lysine 268, lysine 278, and lysine 280 each participate in a glycyl lysine isopeptide (Lys-Gly) (interchain with G-Cter in SUMO2) cross-link. A disordered region spans residues 216–244 (GGAGAPGKGSEKGPPNGMTPAPKEAVTGN). Composition is skewed to basic and acidic residues over residues 281 to 291 (SGEAAEGEARS), 298 to 310 (AAEE…DRTF), and 317 to 332 (SEEK…REEE). Disordered stretches follow at residues 281 to 399 (SGEA…TVGL) and 430 to 451 (TPTC…PTAA). Residues lysine 321, lysine 353, and lysine 366 each participate in a glycyl lysine isopeptide (Lys-Gly) (interchain with G-Cter in SUMO2) cross-link. Over residues 381-396 (PAHHHHHHHHHHHHHT) the composition is skewed to basic residues. Residue serine 463 is modified to Phosphoserine. Residue lysine 490 forms a Glycyl lysine isopeptide (Lys-Gly) (interchain with G-Cter in SUMO2); alternate linkage. Lysine 490 is covalently cross-linked (Glycyl lysine isopeptide (Lys-Gly) (interchain with G-Cter in SUMO); alternate).

As to quaternary structure, interacts with SUV39H1 and HIPK2. Interacts with CSNK2B. Component of a PRC1-like complex. The composition of the PRC1 complex differs between the PRC1 complex in pluripotent embryonic stem cells containing RNF2, CBX7 and PCGF2, and the PRC1 complex in differentiating cells containing RNF2, CBX2, CBX4 and BMI1. Interacts with RNF2. Interacts (via chromodomain) with histone H3K9Me3 and single-stranded RNA (ssRNA). Interacts with CHTOP. May interact with H3C15 and H3C1. Interacts with PRDM1. Ubiquitinated. Ubiquitination regulates the function of the Polycomb group (PcG) multiprotein PRC1-like complex. Deubiquitinated by USP26. As to expression, expressed in embryoid bodies.

It localises to the nucleus. The protein localises to the nucleus speckle. It participates in protein modification; protein sumoylation. Its function is as follows. E3 SUMO-protein ligase that catalyzes sumoylation of target proteins by promoting the transfer of SUMO from the E2 enzyme to the substrate. Involved in the sumoylation of HNRNPK, a p53/TP53 transcriptional coactivator, hence indirectly regulates p53/TP53 transcriptional activation resulting in p21/CDKN1A expression. Component of a Polycomb group (PcG) multiprotein PRC1-like complex, a complex class required to maintain the transcriptionally repressive state of many genes, including Hox genes, throughout development. PcG PRC1 complex acts via chromatin remodeling and modification of histones; it mediates monoubiquitination of histone H2A 'Lys-119', rendering chromatin heritably changed in its expressibility. Binds to histone H3 trimethylated at 'Lys-9' (H3K9me3). Plays a role in the lineage differentiation of the germ layers in embryonic development. The protein is E3 SUMO-protein ligase CBX4 (Cbx4) of Mus musculus (Mouse).